Consider the following 63-residue polypeptide: Glutamine synthetase translation inhibitor (63 aa).

Functionally, inhibits the synthesis of glutamine synthetase II. This is Glutamine synthetase translation inhibitor (gstI) from Rhizobium leguminosarum.